Consider the following 489-residue polypeptide: Glutamyl-tRNA(Gln) amidotransferase subunit A (489 aa).

Active-site charge relay system residues include K77 and S152. S176 functions as the Acyl-ester intermediate in the catalytic mechanism.

This sequence belongs to the amidase family. GatA subfamily. As to quaternary structure, heterotrimer of A, B and C subunits.

It catalyses the reaction L-glutamyl-tRNA(Gln) + L-glutamine + ATP + H2O = L-glutaminyl-tRNA(Gln) + L-glutamate + ADP + phosphate + H(+). Allows the formation of correctly charged Gln-tRNA(Gln) through the transamidation of misacylated Glu-tRNA(Gln) in organisms which lack glutaminyl-tRNA synthetase. The reaction takes place in the presence of glutamine and ATP through an activated gamma-phospho-Glu-tRNA(Gln). The chain is Glutamyl-tRNA(Gln) amidotransferase subunit A from Protochlamydia amoebophila (strain UWE25).